We begin with the raw amino-acid sequence, 53 residues long: Rubredoxin (53 aa).

A Rubredoxin-like domain is found at 1–52; it reads MAKWRCKICGYIYDEDEGDPDNGISPGTKFEDLPDDWVCPLCGAPKSEFERI. Positions 6, 9, 39, and 42 each coordinate Fe cation.

It belongs to the rubredoxin family. The cofactor is Fe(3+).

In terms of biological role, rubredoxin is a small nonheme, iron protein lacking acid-labile sulfide. Its single Fe, chelated to 4 Cys, functions as an electron acceptor and may also stabilize the conformation of the molecule. In Pyrococcus abyssi (strain GE5 / Orsay), this protein is Rubredoxin (rub).